We begin with the raw amino-acid sequence, 185 residues long: MSTDLKQVNKSKKALQRNDNLSESKFVERLIKISRVSKVTKGGKKLSFRAIVVVGNENGQVGVGVGKADDVVNAFKKAKADGRKNLIKIPITKSLSIPHNVIGIFGACKIIMRPSIEGSGVIAGGSVRTVLEVAGIKNVIAKQLGSNNVLNNARAAVSGLNNLTTKSQVLKKRDLHSNSSEKINS.

The 64-residue stretch at 26-89 (FVERLIKISR…ADGRKNLIKI (64 aa)) folds into the S5 DRBM domain.

Belongs to the universal ribosomal protein uS5 family. As to quaternary structure, part of the 30S ribosomal subunit. Contacts protein S4.

It is found in the plastid. Its subcellular location is the chloroplast. Functionally, with S4 and S12 plays an important role in translational accuracy. The sequence is that of Small ribosomal subunit protein uS5c (rps5) from Trieres chinensis (Marine centric diatom).